Here is a 314-residue protein sequence, read N- to C-terminus: Methionyl-tRNA formyltransferase (314 aa).

110-113 (SLLP) serves as a coordination point for (6S)-5,6,7,8-tetrahydrofolate.

It belongs to the Fmt family.

It catalyses the reaction L-methionyl-tRNA(fMet) + (6R)-10-formyltetrahydrofolate = N-formyl-L-methionyl-tRNA(fMet) + (6S)-5,6,7,8-tetrahydrofolate + H(+). In terms of biological role, attaches a formyl group to the free amino group of methionyl-tRNA(fMet). The formyl group appears to play a dual role in the initiator identity of N-formylmethionyl-tRNA by promoting its recognition by IF2 and preventing the misappropriation of this tRNA by the elongation apparatus. The protein is Methionyl-tRNA formyltransferase of Bacillus cereus (strain G9842).